The sequence spans 285 residues: Bifunctional protein FolD (285 aa).

Residues 166–168 (GAS), S191, and I232 contribute to the NADP(+) site.

This sequence belongs to the tetrahydrofolate dehydrogenase/cyclohydrolase family. In terms of assembly, homodimer.

The catalysed reaction is (6R)-5,10-methylene-5,6,7,8-tetrahydrofolate + NADP(+) = (6R)-5,10-methenyltetrahydrofolate + NADPH. It catalyses the reaction (6R)-5,10-methenyltetrahydrofolate + H2O = (6R)-10-formyltetrahydrofolate + H(+). It functions in the pathway one-carbon metabolism; tetrahydrofolate interconversion. Functionally, catalyzes the oxidation of 5,10-methylenetetrahydrofolate to 5,10-methenyltetrahydrofolate and then the hydrolysis of 5,10-methenyltetrahydrofolate to 10-formyltetrahydrofolate. The protein is Bifunctional protein FolD of Actinobacillus pleuropneumoniae serotype 7 (strain AP76).